A 262-amino-acid chain; its full sequence is MENSFKAALKAGRPQIGLWLGLSSSYSAELLAGAGFDWLLIDGEHAPNNVQTVLTQLQAIAPYPNQPVVRPSWNDPVQIKQLLDVGTQTLLVPMVQNADEAREAVRATRYPPAGIRGVGSALARASRWNRIPDYLQKANDQMCVLVQIETREAMKNLPQILDVEGVDGVFIGPADLSADMGYAGNPQHPEVQAAIEQAIVQIRESGKAPGILIANEQLAKRYLELGALFVAVGVDTTLLARAAEALAARFGAQATAVKPGVY.

His45 acts as the Proton acceptor in catalysis. Gln147 serves as a coordination point for substrate. Position 149 (Glu149) interacts with a divalent metal cation. Substrate is bound by residues Ala174 and Asp175. Asp175 provides a ligand contact to a divalent metal cation.

Belongs to the HpcH/HpaI aldolase family. Homohexamer; trimer of dimers. It depends on a divalent metal cation as a cofactor.

It catalyses the reaction 4-hydroxy-2-oxoheptanedioate = succinate semialdehyde + pyruvate. Its pathway is aromatic compound metabolism; 4-hydroxyphenylacetate degradation; pyruvate and succinate semialdehyde from 4-hydroxyphenylacetate: step 7/7. In terms of biological role, catalyzes the reversible retro-aldol cleavage of 4-hydroxy-2-ketoheptane-1,7-dioate (HKHD) to pyruvate and succinic semialdehyde. The chain is 4-hydroxy-2-oxo-heptane-1,7-dioate aldolase from Shigella boydii serotype 18 (strain CDC 3083-94 / BS512).